Here is a 256-residue protein sequence, read N- to C-terminus: MRRPVVMGNWKLNGSKAMVTELLTGLNAELEGVEGVDVAVAPPALYIDLAERLIAEGGNKIILGAQNTDLNNSGAFTGDMSPEMLKDFGATHIIIGHSERREYHNESDEFIAKKFNFLKENGLTPVFCIGESEAQNEAGETEAVCARQINAVIDTYGVEALNGAIIAYEPIWAIGTGKAATAEDAQRIHASIRALIAAKDEAVAAQVIIQYGGSVKPENAEAYFSQPDIDGALVGGASLDAKSFAAIAKAAAAAKA.

A substrate-binding site is contributed by 9–11 (NWK). The active-site Electrophile is His-97. Residue Glu-169 is the Proton acceptor of the active site. Residues Gly-175, Ser-214, and 235-236 (GG) each bind substrate.

The protein belongs to the triosephosphate isomerase family. In terms of assembly, homodimer.

Its subcellular location is the cytoplasm. It catalyses the reaction D-glyceraldehyde 3-phosphate = dihydroxyacetone phosphate. Its pathway is carbohydrate biosynthesis; gluconeogenesis. It functions in the pathway carbohydrate degradation; glycolysis; D-glyceraldehyde 3-phosphate from glycerone phosphate: step 1/1. Involved in the gluconeogenesis. Catalyzes stereospecifically the conversion of dihydroxyacetone phosphate (DHAP) to D-glyceraldehyde-3-phosphate (G3P). The chain is Triosephosphate isomerase from Vibrio parahaemolyticus serotype O3:K6 (strain RIMD 2210633).